The sequence spans 68 residues: UPF0352 protein CPS_2611 (68 aa).

This sequence belongs to the UPF0352 family.

The chain is UPF0352 protein CPS_2611 from Colwellia psychrerythraea (strain 34H / ATCC BAA-681) (Vibrio psychroerythus).